A 1854-amino-acid chain; its full sequence is Dystrophin, isoform D (1854 aa).

8 disordered regions span residues 1 to 65 (MTTT…PIYA), 84 to 161 (GSTT…YEMP), 240 to 352 (QSPT…MSPA), 516 to 548 (LKPT…PTPS), 595 to 650 (TPGG…TSES), 716 to 740 (VMSK…PSTA), 783 to 830 (LKLQ…STTP), and 1012 to 1036 (VSDT…EQSR). 2 stretches are compositionally biased toward low complexity: residues 11 to 37 (QRQQ…QQHQ) and 84 to 96 (GSTT…LQSS). Positions 143–157 (GLSSAQPATSASSGN) are enriched in polar residues. Over residues 276-296 (QQQQQQQQAGINGQINGNGNQ) the composition is skewed to low complexity. Polar residues-rich tracts occupy residues 331 to 345 (TLSR…SSAD) and 518 to 536 (PTST…SNTA). The segment covering 595–606 (TPGGGVVGGQAA) has biased composition (gly residues). Residues 716 to 727 (VMSKSNSSLGSV) show a composition bias toward polar residues. Low complexity-rich tracts occupy residues 728–740 (TTPS…PSTA) and 783–814 (LKLQ…QQIQ). Over residues 815–830 (NGFASDDNSSSCSTTP) the composition is skewed to polar residues. Spectrin repeat units lie at residues 936-1069 (EHWN…RLDE) and 1072-1176 (TKMR…VLCQ). Positions 1179–1209 (AQQTHENGDDGRTTSNSGTIGPLPNLGQSVK) are disordered. The WW domain occupies 1206–1239 (QSVKPPWERATTAANVPYYIDHERETTHWDHPEM). Residues 1464–1520 (KHQAKCNICKEYPIVGFRYRCLKCFNFDMCQKCFFFGRNAKNHKLTHPMHEYCTTTT) form a ZZ-type zinc finger. 8 residues coordinate Zn(2+): Cys-1469, Cys-1472, Cys-1484, Cys-1487, Cys-1493, Cys-1496, His-1506, and His-1510. At Ser-1564 the chain carries Phosphoserine. Disordered regions lie at residues 1673-1701 (EQSG…GEQG) and 1744-1854 (DEPN…ELQK). Composition is skewed to polar residues over residues 1682-1694 (NGMQ…MTGL) and 1765-1796 (ALNS…QQNG). Residues 1815–1826 (QELESINDDLED) are compositionally biased toward acidic residues. The segment covering 1827–1845 (SSSSNTTNTTTTTTTTATT) has biased composition (low complexity).

Component of the dystrophin associated protein complex (DAPC). Interacts with Dg, via the Dg WW domain binding sites. In terms of tissue distribution, during embryogenesis and in third instar larvae, expression is seen in pericardial cells of the dorsal vessel and in the ventral nerve cord. Expression is absent from both the embryonic and larval musculature.

The protein localises to the cell membrane. It localises to the sarcolemma. It is found in the cytoplasm. The protein resides in the cytoskeleton. Required for the maintenance of appropriate synaptic retrograde communication and the stabilization of muscle cell architecture or physiology. May play a role in anchoring the cytoskeleton to the plasma membrane. This is Dystrophin, isoform D (Dys) from Drosophila melanogaster (Fruit fly).